We begin with the raw amino-acid sequence, 323 residues long: tRNA U34 carboxymethyltransferase (323 aa).

Residues lysine 91, tryptophan 105, lysine 110, glycine 130, 152-154 (DPT), 181-182 (IE), methionine 196, tyrosine 200, and arginine 315 contribute to the carboxy-S-adenosyl-L-methionine site.

Belongs to the class I-like SAM-binding methyltransferase superfamily. CmoB family. As to quaternary structure, homotetramer.

The enzyme catalyses carboxy-S-adenosyl-L-methionine + 5-hydroxyuridine(34) in tRNA = 5-carboxymethoxyuridine(34) in tRNA + S-adenosyl-L-homocysteine + H(+). Its function is as follows. Catalyzes carboxymethyl transfer from carboxy-S-adenosyl-L-methionine (Cx-SAM) to 5-hydroxyuridine (ho5U) to form 5-carboxymethoxyuridine (cmo5U) at position 34 in tRNAs. The chain is tRNA U34 carboxymethyltransferase from Escherichia coli O139:H28 (strain E24377A / ETEC).